A 250-amino-acid polypeptide reads, in one-letter code: 3-deoxy-manno-octulosonate cytidylyltransferase (250 aa).

The protein belongs to the KdsB family.

The protein localises to the cytoplasm. The catalysed reaction is 3-deoxy-alpha-D-manno-oct-2-ulosonate + CTP = CMP-3-deoxy-beta-D-manno-octulosonate + diphosphate. Its pathway is nucleotide-sugar biosynthesis; CMP-3-deoxy-D-manno-octulosonate biosynthesis; CMP-3-deoxy-D-manno-octulosonate from 3-deoxy-D-manno-octulosonate and CTP: step 1/1. It functions in the pathway bacterial outer membrane biogenesis; lipopolysaccharide biosynthesis. In terms of biological role, activates KDO (a required 8-carbon sugar) for incorporation into bacterial lipopolysaccharide in Gram-negative bacteria. This chain is 3-deoxy-manno-octulosonate cytidylyltransferase, found in Xanthomonas campestris pv. campestris (strain 8004).